The primary structure comprises 270 residues: uncharacterized protein (270 aa).

Residues 1–22 form the signal peptide; that stretch reads MEYIKKIALYMSVLLLIIFIGG. C23 carries the N-palmitoyl cysteine lipid modification. The S-diacylglycerol cysteine moiety is linked to residue C23.

It belongs to the staphylococcal tandem lipoprotein family.

The protein localises to the cell membrane. This is an uncharacterized protein from Staphylococcus aureus (strain NCTC 8325 / PS 47).